A 292-amino-acid polypeptide reads, in one-letter code: MELLCCEGTRHAPRAGPDPRLLGDQRVLQSLLRLEERYVPRASYFQCVQREIKPHMRKMLAYWMLEVCEEQRCEEEVFPLAMNYLDRYLSCVPTRKAQLQLLGAVCMLLASKLRETTPLTIEKLCIYTDHSVSPRQLRDWEVLVLGKLKWDLAAVIAHDFLALILHRLSLPRDRQALVKKHAQTFLALCATDYTFAMYPPSMIATGSIGAAVQGLGACSTSGDELTELLAGIAGTEVDCLRACQEQIEAALRESLREAAQTSPSPAPKAPRGSSSQGPSQTSTPTDVTAIHL.

Residues 27-152 enclose the Cyclin N-terminal domain; sequence VLQSLLRLEE…LVLGKLKWDL (126 aa). Residues 255-292 form a disordered region; the sequence is LREAAQTSPSPAPKAPRGSSSQGPSQTSTPTDVTAIHL. Residues Ser264 and Ser279 each carry the phosphoserine modification. The segment covering 272 to 285 has biased composition (low complexity); sequence GSSSQGPSQTSTPT. The residue at position 283 (Thr283) is a Phosphothreonine.

This sequence belongs to the cyclin family. Cyclin D subfamily. As to quaternary structure, interacts with the CDK4 and CDK6 protein kinases to form a serine/threonine kinase holoenzyme complex. The cyclin subunit imparts substrate specificity to the complex. Interacts with ATF5. Interacts with EIF3K. Component of the ternary complex cyclin D/CDK4/CDKN1B required for nuclear translocation and modulation of CDK4-mediated kinase activity. Can form similar complexes with either CDKN1A or CDKN2A. Phosphorylation at Thr-283 by MAP kinases is required for ubiquitination and degradation by the DCX(AMBRA1) complex. Post-translationally, ubiquitinated by the DCX(AMBRA1) complex during the transition from G1 to S cell phase, leading to its degradation: ubiquitination is dependent on Thr-283 phosphorylation. The DCX(AMBRA1) complex represents the major regulator of CCND3 stability during the G1/S transition. Polyubiquitinated by the SCF(FBXL2) complex, leading to proteasomal degradation.

It is found in the nucleus. The protein localises to the cytoplasm. Its function is as follows. Regulatory component of the cyclin D3-CDK4 (DC) complex that phosphorylates and inhibits members of the retinoblastoma (RB) protein family including RB1 and regulates the cell-cycle during G(1)/S transition. Phosphorylation of RB1 allows dissociation of the transcription factor E2F from the RB/E2F complex and the subsequent transcription of E2F target genes which are responsible for the progression through the G(1) phase. Hypophosphorylates RB1 in early G(1) phase. Cyclin D-CDK4 complexes are major integrators of various mitogenenic and antimitogenic signals. Component of the ternary complex, cyclin D3/CDK4/CDKN1B, required for nuclear translocation and activity of the cyclin D-CDK4 complex. Shows transcriptional coactivator activity with ATF5 independently of CDK4. The sequence is that of G1/S-specific cyclin-D3 (CCND3) from Bos taurus (Bovine).